The following is a 196-amino-acid chain: Holliday junction branch migration complex subunit RuvA (196 aa).

The tract at residues 1-63 (MISFVSGRVA…EDSLTLYGFA (63 aa)) is domain I. The tract at residues 64 to 136 (DDDERTVFEL…LKDRLGTPST (73 aa)) is domain II. The tract at residues 136-140 (TAAAE) is flexible linker. The interval 141–196 (STSGWRDAVHAGLLNLGYTARQADEAIAAIAGELDDSAAVDTATALRLALATLKRP) is domain III.

The protein belongs to the RuvA family. Homotetramer. Forms an RuvA(8)-RuvB(12)-Holliday junction (HJ) complex. HJ DNA is sandwiched between 2 RuvA tetramers; dsDNA enters through RuvA and exits via RuvB. An RuvB hexamer assembles on each DNA strand where it exits the tetramer. Each RuvB hexamer is contacted by two RuvA subunits (via domain III) on 2 adjacent RuvB subunits; this complex drives branch migration. In the full resolvosome a probable DNA-RuvA(4)-RuvB(12)-RuvC(2) complex forms which resolves the HJ.

The protein resides in the cytoplasm. In terms of biological role, the RuvA-RuvB-RuvC complex processes Holliday junction (HJ) DNA during genetic recombination and DNA repair, while the RuvA-RuvB complex plays an important role in the rescue of blocked DNA replication forks via replication fork reversal (RFR). RuvA specifically binds to HJ cruciform DNA, conferring on it an open structure. The RuvB hexamer acts as an ATP-dependent pump, pulling dsDNA into and through the RuvAB complex. HJ branch migration allows RuvC to scan DNA until it finds its consensus sequence, where it cleaves and resolves the cruciform DNA. The sequence is that of Holliday junction branch migration complex subunit RuvA from Acidothermus cellulolyticus (strain ATCC 43068 / DSM 8971 / 11B).